Consider the following 446-residue polypeptide: tRNA-2-methylthio-N(6)-dimethylallyladenosine synthase (446 aa).

Residues 3-120 (KKIYIKTFGC…LPEMLKQRRS (118 aa)) form the MTTase N-terminal domain. [4Fe-4S] cluster-binding residues include Cys12, Cys49, Cys83, Cys157, Cys161, and Cys164. Positions 143–375 (KVEGATAFVS…QAVIDQNTRR (233 aa)) constitute a Radical SAM core domain. The region spanning 378–444 (DEMVGTVQRI…AYTLRGEIIV (67 aa)) is the TRAM domain.

The protein belongs to the methylthiotransferase family. MiaB subfamily. Monomer. [4Fe-4S] cluster serves as cofactor.

It localises to the cytoplasm. It carries out the reaction N(6)-dimethylallyladenosine(37) in tRNA + (sulfur carrier)-SH + AH2 + 2 S-adenosyl-L-methionine = 2-methylsulfanyl-N(6)-dimethylallyladenosine(37) in tRNA + (sulfur carrier)-H + 5'-deoxyadenosine + L-methionine + A + S-adenosyl-L-homocysteine + 2 H(+). Functionally, catalyzes the methylthiolation of N6-(dimethylallyl)adenosine (i(6)A), leading to the formation of 2-methylthio-N6-(dimethylallyl)adenosine (ms(2)i(6)A) at position 37 in tRNAs that read codons beginning with uridine. This is tRNA-2-methylthio-N(6)-dimethylallyladenosine synthase from Janthinobacterium sp. (strain Marseille) (Minibacterium massiliensis).